The chain runs to 262 residues: Small ribosomal subunit protein mS23 (262 aa).

The segment at 211-262 (SGQSDEAPEGEGSDMSAGEYDMAVEELAGQGSIPNTPQSTVVPEGTSAPAHA) is disordered. Over residues 242-251 (SIPNTPQSTV) the composition is skewed to polar residues.

It belongs to the mitochondrion-specific ribosomal protein mS23 family. As to quaternary structure, component of the mitochondrial small ribosomal subunit.

Its subcellular location is the mitochondrion. The polypeptide is Small ribosomal subunit protein mS23 (RSM25) (Phaeosphaeria nodorum (strain SN15 / ATCC MYA-4574 / FGSC 10173) (Glume blotch fungus)).